We begin with the raw amino-acid sequence, 500 residues long: MLRKLLLLLMSCIIFLTRRSKAAAAASASKTLVWGPGLETNAVLPARFFFIQTVDTTGTNFTTSPGENTFEVKITSPTEPYARIWIQILDRNDGSFLVRYRMYASYTDLHVEVLLKDKLVGKSPYVLRGAVYHESCDCPEPDGALWEKNMHCPASFSQIESDLSIFQSVDPDRNAHEIIQRFGKSHSLCHYTIKNNQVYIKTHGEHVGFRIFMDAFLLSLTRKVKLPDIEFFVNLGDWPLEKRRASQNPSPVFSWCGSNDTRDIVMPTYDLTESVLETMGRVSLDMMSVQGHTGPVWEKKINKGFWRGRDSRKERLELVKLARANTAMLDAALTNFFFFKHDESLYGPLVKHVSFFDFFKYKYQINVDGTVAAYRLPYLLAGDSVVFKHDSIYYEHFYNELQPWVHYIPFRSDLSDLLEKIQWAKDHDEEAKKIALAGQQFARTHLMGDSVFCYYHKLFQKYAELQVTKPKVRDGMELVEQPKDDLFPCYCARKKVRDEL.

An N-terminal signal peptide occupies residues 1 to 22; sequence MLRKLLLLLMSCIIFLTRRSKA. The stretch at 23–128 is one Filamin repeat; that stretch reads AAAASASKTL…LVGKSPYVLR (106 aa). Asn60 and Asn259 each carry an N-linked (GlcNAc...) asparagine glycan. The Prevents secretion from ER motif lies at 497-500; it reads RDEL.

This sequence belongs to the KDELC family.

The protein localises to the endoplasmic reticulum lumen. The catalysed reaction is L-seryl-[EGF-like domain protein] + UDP-alpha-D-glucose = 3-O-(beta-D-glucosyl)-L-seryl-[EGF-like domain protein] + UDP + H(+). The enzyme catalyses L-seryl-[EGF-like domain protein] + UDP-alpha-D-xylose = 3-O-(beta-D-xylosyl)-L-seryl-[EGF-like domain protein] + UDP + H(+). It participates in protein modification; protein glycosylation. Protein glucosyltransferase that catalyzes the transfer of glucose from UDP-glucose to a serine residue within the consensus sequence peptide C-X-N-T-X-G-S-F-X-C. Can also catalyze the transfer of xylose from UDP-xylose but less efficiently. This is Protein O-glucosyltransferase 2 (poglut2) from Danio rerio (Zebrafish).